A 317-amino-acid polypeptide reads, in one-letter code: 2,3,4,5-tetrahydropyridine-2,6-dicarboxylate N-succinyltransferase (317 aa).

Aspartate 166 and glutamate 183 together coordinate Mg(2+). The Acyl-anhydride intermediate role is filled by glutamate 199. Residues arginine 201, glycine 216, serine 219, alanine 242, 257–258, glycine 265, lysine 277, and 290–293 each bind succinyl-CoA; these read EA and RRNS.

This sequence belongs to the type 2 tetrahydrodipicolinate N-succinyltransferase family. In terms of assembly, homotrimer.

The protein localises to the cytoplasm. It carries out the reaction (S)-2,3,4,5-tetrahydrodipicolinate + succinyl-CoA + H2O = (S)-2-succinylamino-6-oxoheptanedioate + CoA. The protein operates within amino-acid biosynthesis; L-lysine biosynthesis via DAP pathway; LL-2,6-diaminopimelate from (S)-tetrahydrodipicolinate (succinylase route): step 1/3. In terms of biological role, catalyzes the conversion of the cyclic tetrahydrodipicolinate (THDP) into the acyclic N-succinyl-L-2-amino-6-oxopimelate using succinyl-CoA. In Mycobacterium tuberculosis (strain CDC 1551 / Oshkosh), this protein is 2,3,4,5-tetrahydropyridine-2,6-dicarboxylate N-succinyltransferase (dapD).